The sequence spans 130 residues: Small ribosomal subunit protein uS8 (130 aa).

The protein belongs to the universal ribosomal protein uS8 family. Part of the 30S ribosomal subunit.

Functionally, one of the primary rRNA binding proteins, it binds directly to 16S rRNA central domain where it helps coordinate assembly of the platform of the 30S subunit. The polypeptide is Small ribosomal subunit protein uS8 (Methanotorris igneus (Methanococcus igneus)).